A 503-amino-acid chain; its full sequence is Probable cytosol aminopeptidase (503 aa).

Mn(2+)-binding residues include K270 and D275. K282 is an active-site residue. Residues D293, D352, and E354 each coordinate Mn(2+). Residue R356 is part of the active site.

Belongs to the peptidase M17 family. Requires Mn(2+) as cofactor.

Its subcellular location is the cytoplasm. It catalyses the reaction Release of an N-terminal amino acid, Xaa-|-Yaa-, in which Xaa is preferably Leu, but may be other amino acids including Pro although not Arg or Lys, and Yaa may be Pro. Amino acid amides and methyl esters are also readily hydrolyzed, but rates on arylamides are exceedingly low.. It carries out the reaction Release of an N-terminal amino acid, preferentially leucine, but not glutamic or aspartic acids.. In terms of biological role, presumably involved in the processing and regular turnover of intracellular proteins. Catalyzes the removal of unsubstituted N-terminal amino acids from various peptides. The sequence is that of Probable cytosol aminopeptidase from Klebsiella pneumoniae subsp. pneumoniae (strain ATCC 700721 / MGH 78578).